Reading from the N-terminus, the 321-residue chain is Tet-like dioxygenase 1 (321 aa).

A Fe2OG dioxygenase domain is found at 198–298 (DSYYALNNCL…RIGLVYFAHK (101 aa)). 2 residues coordinate 2-oxoglutarate: Asn214 and Arg224. Residues His229 and Asp231 each coordinate Fe cation. Tyr242 is a 2-oxoglutarate binding site. His279 contacts Fe cation. Residue Arg289 coordinates 2-oxoglutarate. Residue Gln310 coordinates substrate.

It depends on Fe(2+) as a cofactor.

The enzyme catalyses a 5-methyl-2'-deoxycytidine in DNA + 2-oxoglutarate + O2 = a 5-hydroxymethyl-2'-deoxycytidine in DNA + succinate + CO2. The catalysed reaction is a 5-hydroxymethyl-2'-deoxycytidine in DNA + 2-oxoglutarate + O2 = a 5-formyl-2'-deoxycytidine in DNA + succinate + CO2 + H2O. It carries out the reaction a 5-formyl-2'-deoxycytidine in DNA + 2-oxoglutarate + O2 = a 5-carboxyl-2'-deoxycytidine in DNA + succinate + CO2 + H(+). In terms of biological role, dioxygenase that catalyzes the conversion of the modified genomic base 5-methylcytosine (5mC) into 5-hydroxymethylcytosine (5hmC), and thereby plays a role in active DNA demethylation. Also mediates subsequent conversion of 5hmC into 5-formylcytosine (5fC), and conversion of 5fC to 5-carboxylcytosine (5caC). The sequence is that of Tet-like dioxygenase 1 from Naegleria gruberi (Amoeba).